We begin with the raw amino-acid sequence, 570 residues long: Proline--tRNA ligase (570 aa).

This sequence belongs to the class-II aminoacyl-tRNA synthetase family. ProS type 1 subfamily. As to quaternary structure, homodimer.

It is found in the cytoplasm. The catalysed reaction is tRNA(Pro) + L-proline + ATP = L-prolyl-tRNA(Pro) + AMP + diphosphate. In terms of biological role, catalyzes the attachment of proline to tRNA(Pro) in a two-step reaction: proline is first activated by ATP to form Pro-AMP and then transferred to the acceptor end of tRNA(Pro). As ProRS can inadvertently accommodate and process non-cognate amino acids such as alanine and cysteine, to avoid such errors it has two additional distinct editing activities against alanine. One activity is designated as 'pretransfer' editing and involves the tRNA(Pro)-independent hydrolysis of activated Ala-AMP. The other activity is designated 'posttransfer' editing and involves deacylation of mischarged Ala-tRNA(Pro). The misacylated Cys-tRNA(Pro) is not edited by ProRS. The protein is Proline--tRNA ligase of Acidithiobacillus ferrooxidans (strain ATCC 23270 / DSM 14882 / CIP 104768 / NCIMB 8455) (Ferrobacillus ferrooxidans (strain ATCC 23270)).